The chain runs to 237 residues: Proteasome subunit beta type-1-B (237 aa).

The protein belongs to the peptidase T1B family. The 26S proteasome consists of a 20S proteasome core and two 19S regulatory subunits. The 20S proteasome core is composed of 28 subunits that are arranged in four stacked rings, resulting in a barrel-shaped structure. The two end rings are each formed by seven alpha subunits, and the two central rings are each formed by seven beta subunits. The catalytic chamber with the active sites is on the inside of the barrel.

Its subcellular location is the cytoplasm. It is found in the nucleus. In terms of biological role, non-catalytic component of the proteasome, a multicatalytic proteinase complex which is characterized by its ability to cleave peptides with Arg, Phe, Tyr, Leu, and Glu adjacent to the leaving group at neutral or slightly basic pH. The proteasome has an ATP-dependent proteolytic activity. In Carassius auratus (Goldfish), this protein is Proteasome subunit beta type-1-B (psmb1-B).